A 1025-amino-acid polypeptide reads, in one-letter code: Multidrug resistance protein MdtC (1025 aa).

12 helical membrane passes run isoleucine 15–alanine 35, glutamate 333–leucine 353, leucine 360–cysteine 380, leucine 387–leucine 407, valine 431–leucine 451, valine 469–leucine 489, leucine 528–proline 548, alanine 851–tyrosine 871, valine 875–leucine 895, isoleucine 897–valine 917, proline 953–glycine 973, and isoleucine 984–valine 1004.

It belongs to the resistance-nodulation-cell division (RND) (TC 2.A.6) family. MdtC subfamily. As to quaternary structure, part of a tripartite efflux system composed of MdtA, MdtB and MdtC. MdtC forms a heteromultimer with MdtB.

It localises to the cell inner membrane. This is Multidrug resistance protein MdtC from Klebsiella pneumoniae subsp. pneumoniae (strain ATCC 700721 / MGH 78578).